A 321-amino-acid chain; its full sequence is Probable arabinan endo-1,5-alpha-L-arabinosidase C (321 aa).

The first 18 residues, 1-18 (MYLYTLILLFLASANVNA), serve as a signal peptide directing secretion. The active-site Proton acceptor is the D33. A glycan (N-linked (GlcNAc...) asparagine) is linked at N192. The active-site Proton donor is the E200. N224 is a glycosylation site (N-linked (GlcNAc...) asparagine).

It belongs to the glycosyl hydrolase 43 family.

It localises to the secreted. It carries out the reaction Endohydrolysis of (1-&gt;5)-alpha-arabinofuranosidic linkages in (1-&gt;5)-arabinans.. It participates in glycan metabolism; L-arabinan degradation. Functionally, endo-1,5-alpha-L-arabinanase involved in degradation of pectin. Its preferred substrate is linear 1,5-alpha-L-arabinan. In Aspergillus fumigatus (strain CBS 144.89 / FGSC A1163 / CEA10) (Neosartorya fumigata), this protein is Probable arabinan endo-1,5-alpha-L-arabinosidase C (abnC).